We begin with the raw amino-acid sequence, 399 residues long: Ubiquitin-like modifier-activating enzyme 5 (399 aa).

Residues Gly76, Asp97, Lys120, Asn143, and Asn177 each contribute to the ATP site. Cys219 and Cys222 together coordinate Zn(2+). The Glycyl thioester intermediate role is filled by Cys243. Residues Cys296 and Cys301 each contribute to the Zn(2+) site.

Belongs to the ubiquitin-activating E1 family. UBA5 subfamily.

In terms of biological role, E1-like enzyme which activates UFM1. This chain is Ubiquitin-like modifier-activating enzyme 5, found in Drosophila mojavensis (Fruit fly).